The primary structure comprises 557 residues: Dihydroxy-acid dehydratase (557 aa).

[2Fe-2S] cluster is bound at residue C50. D82 is a binding site for Mg(2+). Residue C123 participates in [2Fe-2S] cluster binding. Mg(2+) is bound by residues D124 and K125. At K125 the chain carries N6-carboxylysine. Residue C195 coordinates [2Fe-2S] cluster. E447 contacts Mg(2+). The active-site Proton acceptor is S473.

It belongs to the IlvD/Edd family. Homodimer. Requires [2Fe-2S] cluster as cofactor. The cofactor is Mg(2+).

It catalyses the reaction (2R)-2,3-dihydroxy-3-methylbutanoate = 3-methyl-2-oxobutanoate + H2O. It carries out the reaction (2R,3R)-2,3-dihydroxy-3-methylpentanoate = (S)-3-methyl-2-oxopentanoate + H2O. It functions in the pathway amino-acid biosynthesis; L-isoleucine biosynthesis; L-isoleucine from 2-oxobutanoate: step 3/4. The protein operates within amino-acid biosynthesis; L-valine biosynthesis; L-valine from pyruvate: step 3/4. Functionally, functions in the biosynthesis of branched-chain amino acids. Catalyzes the dehydration of (2R,3R)-2,3-dihydroxy-3-methylpentanoate (2,3-dihydroxy-3-methylvalerate) into 2-oxo-3-methylpentanoate (2-oxo-3-methylvalerate) and of (2R)-2,3-dihydroxy-3-methylbutanoate (2,3-dihydroxyisovalerate) into 2-oxo-3-methylbutanoate (2-oxoisovalerate), the penultimate precursor to L-isoleucine and L-valine, respectively. In Janthinobacterium sp. (strain Marseille) (Minibacterium massiliensis), this protein is Dihydroxy-acid dehydratase.